A 596-amino-acid polypeptide reads, in one-letter code: Probable lysosomal cobalamin transporter (596 aa).

The next 10 helical transmembrane spans lie at 7–27 (AFIW…AAIF), 46–66 (IITL…IALV), 95–115 (IVYY…IPFT), 145–165 (TLFF…APVA), 196–216 (LLIS…LALL), 313–333 (LVGG…MLIT), 350–370 (ILGS…SSIV), 376–396 (VLMA…IAVI), 420–440 (MATV…AMII), and 507–527 (FFGA…LIVF). Positions 566 to 596 (WQDIRGKAKNQTPSRGAAGRGIRGDDDHDDD) are disordered. Over residues 587 to 596 (IRGDDDHDDD) the composition is skewed to basic and acidic residues.

It belongs to the LIMR family. LMBRD1 subfamily.

The protein localises to the lysosome membrane. Probable lysosomal cobalamin transporter. Required to export cobalamin from lysosomes allowing its conversion to cofactors. The protein is Probable lysosomal cobalamin transporter of Sclerotinia sclerotiorum (strain ATCC 18683 / 1980 / Ss-1) (White mold).